Reading from the N-terminus, the 1367-residue chain is DNA-directed RNA polymerase subunit beta' (1367 aa).

A disordered region spans residues 1–34; it reads MTSTSPKSRKSSSKRKGSKKKAARSKNVIPPLSK. Residues 7-24 are compositionally biased toward basic residues; that stretch reads KSRKSSSKRKGSKKKAAR. Positions 250, 317, 324, and 327 each coordinate Zn(2+). Residues 1306–1367 are disordered; it reads SVLDDPSDAD…LQEEGLLSDE (62 aa). A compositionally biased stretch (low complexity) spans 1355-1367; that stretch reads LEGLQEEGLLSDE.

It belongs to the RNA polymerase beta' chain family. RpoC2 subfamily. In cyanobacteria the RNAP catalytic core is composed of 2 alpha, 1 beta, 1 beta', 1 gamma and 1 omega subunit. When a sigma factor is associated with the core the holoenzyme is formed, which can initiate transcription. Zn(2+) is required as a cofactor.

The catalysed reaction is RNA(n) + a ribonucleoside 5'-triphosphate = RNA(n+1) + diphosphate. In terms of biological role, DNA-dependent RNA polymerase catalyzes the transcription of DNA into RNA using the four ribonucleoside triphosphates as substrates. The polypeptide is DNA-directed RNA polymerase subunit beta' (Prochlorococcus marinus (strain SARG / CCMP1375 / SS120)).